A 100-amino-acid chain; its full sequence is Large ribosomal subunit protein eL21 (100 aa).

Positions Met1–Arg21 are enriched in basic residues. Residues Met1–Glu22 form a disordered region.

Belongs to the eukaryotic ribosomal protein eL21 family.

The polypeptide is Large ribosomal subunit protein eL21 (Pyrobaculum neutrophilum (strain DSM 2338 / JCM 9278 / NBRC 100436 / V24Sta) (Thermoproteus neutrophilus)).